We begin with the raw amino-acid sequence, 656 residues long: NADH-ubiquinone oxidoreductase chain 5 (656 aa).

Helical transmembrane passes span 5–23 (IIIL…GRKL), 30–52 (IITC…EVGF), 81–103 (LTVS…SISY), 112–129 (RFFS…ILVT), 133–155 (YLLM…SFWF), 168–190 (FLTN…WSLG), 200–222 (LAPY…GAMA), 243–262 (VSAL…LLMR), 272–294 (TVLL…VGLF), 301–320 (VIAY…IGLS), 324–346 (IALF…AGSI), 367–389 (PLTY…LTGF), 409–431 (SVYA…VIYL), 452–471 (IFLT…FGYL), 514–536 (FIFT…GSVF), 607–629 (LSTG…FIII), and 634–653 (QISS…SLNF).

This sequence belongs to the complex I subunit 5 family.

It is found in the mitochondrion inner membrane. It carries out the reaction a ubiquinone + NADH + 5 H(+)(in) = a ubiquinol + NAD(+) + 4 H(+)(out). Functionally, core subunit of the mitochondrial membrane respiratory chain NADH dehydrogenase (Complex I) that is believed to belong to the minimal assembly required for catalysis. Complex I functions in the transfer of electrons from NADH to the respiratory chain. The immediate electron acceptor for the enzyme is believed to be ubiquinone. This Cryphonectria parasitica (Chestnut blight fungus) protein is NADH-ubiquinone oxidoreductase chain 5 (ND5).